The primary structure comprises 276 residues: NAD kinase (276 aa).

Catalysis depends on D61, which acts as the Proton acceptor. NAD(+) contacts are provided by residues 61–62 (DG), 134–135 (ND), R145, K162, D164, V172, 175–180 (TAYSFS), and Q234.

Belongs to the NAD kinase family. The cofactor is a divalent metal cation.

The protein resides in the cytoplasm. The enzyme catalyses NAD(+) + ATP = ADP + NADP(+) + H(+). Functionally, involved in the regulation of the intracellular balance of NAD and NADP, and is a key enzyme in the biosynthesis of NADP. Catalyzes specifically the phosphorylation on 2'-hydroxyl of the adenosine moiety of NAD to yield NADP. The protein is NAD kinase of Clostridium perfringens (strain 13 / Type A).